The following is a 385-amino-acid chain: S-adenosylmethionine synthase (385 aa).

Histidine 16 lines the ATP pocket. Aspartate 18 provides a ligand contact to Mg(2+). Residue glutamate 44 coordinates K(+). L-methionine-binding residues include glutamate 57 and glutamine 100. Residues 100 to 110 form a flexible loop region; sequence QSPDINQGVDR. ATP is bound by residues 164–166, 230–231, aspartate 239, 245–246, alanine 262, and lysine 266; these read DGK, KF, and RK. Aspartate 239 contacts L-methionine. Residue lysine 270 participates in L-methionine binding.

The protein belongs to the AdoMet synthase family. As to quaternary structure, homotetramer; dimer of dimers. It depends on Mg(2+) as a cofactor. K(+) serves as cofactor.

It is found in the cytoplasm. It carries out the reaction L-methionine + ATP + H2O = S-adenosyl-L-methionine + phosphate + diphosphate. It participates in amino-acid biosynthesis; S-adenosyl-L-methionine biosynthesis; S-adenosyl-L-methionine from L-methionine: step 1/1. Its function is as follows. Catalyzes the formation of S-adenosylmethionine (AdoMet) from methionine and ATP. The overall synthetic reaction is composed of two sequential steps, AdoMet formation and the subsequent tripolyphosphate hydrolysis which occurs prior to release of AdoMet from the enzyme. The chain is S-adenosylmethionine synthase from Helicobacter pylori (strain ATCC 700392 / 26695) (Campylobacter pylori).